A 129-amino-acid polypeptide reads, in one-letter code: Large ribosomal subunit protein bL20 (129 aa).

It belongs to the bacterial ribosomal protein bL20 family.

Functionally, binds directly to 23S ribosomal RNA and is necessary for the in vitro assembly process of the 50S ribosomal subunit. It is not involved in the protein synthesizing functions of that subunit. The chain is Large ribosomal subunit protein bL20 from Mycobacterium tuberculosis (strain ATCC 25177 / H37Ra).